The sequence spans 342 residues: L-threonine 3-dehydrogenase (342 aa).

Cysteine 38 contacts Zn(2+). Residues threonine 40 and histidine 43 each act as charge relay system in the active site. The Zn(2+) site is built by histidine 63, glutamate 64, cysteine 93, cysteine 96, cysteine 99, and cysteine 107. Residues isoleucine 175, aspartate 195, arginine 200, 262–264 (LGI), and 286–287 (IY) contribute to the NAD(+) site.

It belongs to the zinc-containing alcohol dehydrogenase family. As to quaternary structure, homotetramer. Zn(2+) serves as cofactor.

Its subcellular location is the cytoplasm. The enzyme catalyses L-threonine + NAD(+) = (2S)-2-amino-3-oxobutanoate + NADH + H(+). The protein operates within amino-acid degradation; L-threonine degradation via oxydo-reductase pathway; glycine from L-threonine: step 1/2. Catalyzes the NAD(+)-dependent oxidation of L-threonine to 2-amino-3-ketobutyrate. The polypeptide is L-threonine 3-dehydrogenase (Burkholderia cenocepacia (strain HI2424)).